The following is a 490-amino-acid chain: MSAIFEILDKDAGGRIGKLRTPHGVVETPTVMPVINPNIQLISPKEMRSFGAEILITNSYIIYRKEELRTVALEKGLHELLGFDGPIMTDSGSFQLSVYGSVEVTNEEILGFQEKIGSDIIVPLDIPTPPDVHFRRAEEELATTAERLEAARKFIQSKQLLAGPVQGSTYPELREKAASHLKDLNFEVYPLGAVVPLMESYRYAELVDVIAASKKGLSPTSPVHLFGAGHPMMFALAVALGCDLFDSAAYALYAKDGRYITSNGTYHLEKLNYLPCSCPVCSRYTAEELRKAKNKEELLGRHNLYATFAEIRLIKQSIKDGKLLELVEQRCRAHPKLLDGLKRLYTHSAWLEQFDPATKGTYFYCGPESASRPEVLRFGKRLERFSIEGSAIIRTSPVKGEKDYDRILTFKAPFGTFPAEMEEVYPFNAEVPKFPDYEALSTSLSNTIKLMDLNPGAEFTFICEKEFQHPLIEEIGKKAKLVYREAWKKE.

Asp-90 serves as the catalytic Nucleophile. Asp-125 and Ala-193 together coordinate substrate. Cys-276, Cys-278, and Cys-281 together coordinate Zn(2+).

Belongs to the archaeosine tRNA-ribosyltransferase family. Zn(2+) is required as a cofactor.

It carries out the reaction guanosine(15) in tRNA + 7-cyano-7-deazaguanine = 7-cyano-7-carbaguanosine(15) in tRNA + guanine. It functions in the pathway tRNA modification; archaeosine-tRNA biosynthesis. Exchanges the guanine residue with 7-cyano-7-deazaguanine (preQ0) at position 15 in the dihydrouridine loop (D-loop) of archaeal tRNAs. This is tRNA-guanine(15) transglycosylase from Methanosarcina mazei (strain ATCC BAA-159 / DSM 3647 / Goe1 / Go1 / JCM 11833 / OCM 88) (Methanosarcina frisia).